We begin with the raw amino-acid sequence, 1453 residues long: MCPEEGGAAGLGELRSWWEVPAIAHFCSLFRTAFRLPDFEIEELEAALHRDDVEFISDLIACLLQGCYQRRDITPQTFHSYLEDIINYRWELEEGKPNPLREASFQDLPLRTRVEILHRLCDYRLDADDVFDLLKGLDADSLRVEPLGEDNSGALYWYFYGTRMYKEDPVQGRSNGELSLCRESERQKNVSNVPGKTGKRRGRPPKRKKLQEEIISSEKQEENSLTSDLQTRNGSRGPGQGTWWLLCQTEEEWRQVTESFRERTSLRERQLYKLLSEDFLPEICNMIAQKGKRPQRTKPELQHRFMSDHLSIKSIKLEETPMLTKIEKQKRREEEEERQLLLAVQKKEQEQMLKEERKREMEEKVKAVEDRAKRRKLREERAWLLAQGKELPPELSHLDLNSPMREGKKTKDLFELDDDFTAMYKVLDVVKAHKDSWPFLEPVDESYAPNYYQIIKIPMDISSMEKKLNGGLYCNKEEFVNDMKTMFRNCRKYNGDSSEYTKMSDNLERCFHRAMTKHFPGEDGDTDEEFWIKEDEKREKRRSRSGRSSGSHVWTRSRDTEGSSRKQPPVENGGKSLPPARRAASSGDDQSRSSIQLPPEVGTSHGQGFSRPLHCGRVPSHAPPLNQMRPAAPGTFGSLQGSDPTNLHGSSRIPEAPPGEPLQHPPFAIQAPVGISNHRGSLLSAPDLSNMGSHVPSLQLGQMNCPSQDGNMYPPAPFQAGFIPSRHGGTPARPPDFPESSEIPPGHIYHSYKYLNRAHPAVWNGNHGTTNPGRLGPDEKPHLGPGPSHHPHTLGHMMDGRVMRQPIPPNQWTKQSSFLPHGVPSSGYMQPPCKSAGHRLQPPPTPAPSPRFRGPSQALRGAQGGESMMDSPEMIAMQQLSSRVCPPGVPYHPRQPTPPQLPGPFPQVAHSASVCVSAPKPALDNPGSTQEMTETHEPEEDPAEPLPGHEEKAASICSSEGVYLKQLPHPAPPLQASCTRQSSPQERETEDSQLKSDASDSADTYKTSKNKNTWPLDNSYSSPAVQGCLRDLSIVAETGNLPENGVVGEASPCRSEGKGLDGSGSEKPLCPRGKTLQEAVPCTGPNATTPPCTDPSLMAATVNQFSPLYMPGIEYSNSATQYPMSPSLQGLASMMGGKSSGSQPQSFPPRGFQANGPHPGLFPRYRPQQGMRYSYQPPSQPSYHPYQRTPYYTCPQGFSDWQRSLPSQRSPSGPPGSHPPRSLFSEKNVLSSLQGCETLNTALTSPTQMDVVTAKVVPPDGHNSGPEEEKMDESVERPESPKEFLDLDNHNAATKRQNSLSTSDYLYGTPPPSLSSGMTFGSSAFPPHSVMLQTGSPYTPQRSASHFQPRAYPSPVPAHPPPHPVATQPNGLSPEDSLYCCQEEGLGHFQASMMEQTGTGSGLRGSFQEVHRPPGLQMHPVQSQSLFPKTPAPAASPEQLPPHKTPTLPLDQS.

Residues 170 to 237 (VQGRSNGELS…DLQTRNGSRG (68 aa)) are disordered. Basic residues predominate over residues 197–209 (TGKRRGRPPKRKK). Basic and acidic residues predominate over residues 210–222 (LQEEIISSEKQEE). The span at 223 to 234 (NSLTSDLQTRNG) shows a compositional bias: polar residues. Residue serine 402 is modified to Phosphoserine. A Bromo domain is found at 414–518 (FELDDDFTAM…RCFHRAMTKH (105 aa)). Threonine 526 is subject to Phosphothreonine. Disordered stretches follow at residues 536–667 (EKRE…HPPF), 767–796 (HGTT…TLGH), 827–868 (GYMQ…GESM), 884–1020 (VCPP…DNSY), 1046–1072 (VVGE…LCPR), 1131–1308 (LASM…YLYG), 1331–1368 (MLQT…VATQ), and 1396–1453 (QTGT…LDQS). Serine 551 is subject to Phosphoserine. Polar residues predominate over residues 637-649 (GSLQGSDPTNLHG). Residues 655-664 (EAPPGEPLQH) show a composition bias toward pro residues. Residues 887 to 905 (PGVPYHPRQPTPPQLPGPF) are compositionally biased toward pro residues. Serine 983 carries the phosphoserine modification. A compositionally biased stretch (basic and acidic residues) spans 985–998 (QERETEDSQLKSDA). The span at 999–1020 (SDSADTYKTSKNKNTWPLDNSY) shows a compositional bias: polar residues. Asymmetric dimethylarginine occurs at positions 1166 and 1172. 2 stretches are compositionally biased toward low complexity: residues 1173–1187 (YSYQ…HPYQ) and 1202–1211 (QRSLPSQRSP). Over residues 1228–1250 (NVLSSLQGCETLNTALTSPTQMD) the composition is skewed to polar residues. Basic and acidic residues predominate over residues 1265–1289 (GPEEEKMDESVERPESPKEFLDLDN). Serine 1280 carries the post-translational modification Phosphoserine. Polar residues-rich tracts occupy residues 1291–1304 (NAAT…STSD) and 1331–1346 (MLQT…SASH). A compositionally biased stretch (pro residues) spans 1352–1364 (YPSPVPAHPPPHP).

Component of the CERF-1 ISWI chromatin remodeling complex (also called the CECR2-containing remodeling factor (CERF) complex) at least composed of CECR2 and SMARCA1. Component of the CERF-5 ISWI chromatin remodeling complex at least composed of CECR2 and SMARCA5/SNF2H. LUZP1 is detected as part of the CERF-1 and CERF-5 complexes in embryonic stem (ES) cells where it is involved in complex stabilization but is not detected in the complexes in the testis. Interacts with CCAR2; CCAR2 may form part of the CERF-1 and/or CEF-5 ISWI chromatin remodeling complexes in ES cells. Interacts with acetylated lysine residues on histone H2A and H3 (in vitro). Interacts with LRPPRC.

The protein localises to the nucleus. In terms of biological role, regulatory subunit of the ATP-dependent CERF-1 and CERF-5 ISWI chromatin remodeling complexes, which form ordered nucleosome arrays on chromatin and facilitate access to DNA during DNA-templated processes such as DNA replication, transcription, and repair. The complexes do not have the ability to slide mononucleosomes to the center of a DNA template. The CERF-1 ISWI chromatin remodeling complex has a lower ATP hydrolysis rate than the CERF-5 ISWI chromatin remodeling complex. Plays a role in various processes during development: required during embryogenesis for neural tube closure and inner ear development. In adults, required for spermatogenesis, via the formation of ISWI-type chromatin complexes. In histone-modifying complexes, CECR2 recognizes and binds acylated histones: binds histones that are acetylated and/or butyrylated. May also be involved through its interaction with LRPPRC in the integration of cytoskeletal network with vesicular trafficking, nucleocytosolic shuttling, transcription, chromosome remodeling and cytokinesis. The chain is Chromatin remodeling regulator CECR2 from Mus musculus (Mouse).